Consider the following 202-residue polypeptide: GTP cyclohydrolase 1 (202 aa).

3 residues coordinate Zn(2+): Cys-90, His-93, and Cys-163.

It belongs to the GTP cyclohydrolase I family. Homomer.

The catalysed reaction is GTP + H2O = 7,8-dihydroneopterin 3'-triphosphate + formate + H(+). It participates in cofactor biosynthesis; 7,8-dihydroneopterin triphosphate biosynthesis; 7,8-dihydroneopterin triphosphate from GTP: step 1/1. The protein is GTP cyclohydrolase 1 of Mycobacterium marinum (strain ATCC BAA-535 / M).